A 196-amino-acid polypeptide reads, in one-letter code: Heat shock protein beta-8 (196 aa).

Positions 1 to 28 (MADGQLPFPCSYPSRLRRDPFRDSPLSS) are disordered. 2 positions are modified to phosphoserine: Ser-24 and Ser-57. Phosphothreonine is present on Thr-63. Asymmetric dimethylarginine occurs at positions 71 and 78. In terms of domain architecture, sHSP spans 74–185 (TATARFGVPA…PFGESSFNNE (112 aa)). Residues 176-196 (PFGESSFNNELPQDNQEVTCS) form a disordered region. The segment covering 178–196 (GESSFNNELPQDNQEVTCS) has biased composition (polar residues).

It belongs to the small heat shock protein (HSP20) family. Monomer. Forms a ternary complex with BAG3 and HSPA1A. Component of the chaperone-assisted selective autophagy (CASA) complex consisting of BAG3, HSPA8/HSC70, HSPB8 and STUB1/CHIP. Interacts with HSPB1. Interacts with DNAJB6. Interacts with BAG3. Post-translationally, phosphorylated.

It localises to the cytoplasm. It is found in the nucleus. In terms of biological role, involved in the chaperone-assisted selective autophagy (CASA), a crucial process for protein quality control, particularly in mechanical strained cells and tissues such as muscle. Displays temperature-dependent chaperone activity. In Rattus norvegicus (Rat), this protein is Heat shock protein beta-8 (Hspb8).